The sequence spans 532 residues: All-trans-retinyl ester 13-cis isomerohydrolase (532 aa).

Residue cysteine 112 is the site of S-palmitoyl cysteine; in membrane form attachment. Positions 180, 241, and 313 each coordinate Fe cation. Cysteine 329 carries the S-palmitoyl cysteine; in membrane form lipid modification. Residue histidine 527 participates in Fe cation binding.

The protein belongs to the carotenoid oxygenase family. It depends on Fe(2+) as a cofactor. Post-translationally, palmitoylated. As to expression, predominantly expressed in brain. Expressed at a low level in the eye.

Its subcellular location is the cytoplasm. The protein localises to the cell membrane. It catalyses the reaction an all-trans-retinyl ester + H2O = 13-cis-retinol + a fatty acid + H(+). The catalysed reaction is lutein = (3R,3'S)-zeaxanthin. Functionally, specifically generates 13-cis retinol, a stereoisomeric form of retinoic acid. Capable of catalyzing the isomerization of lutein to meso-zeaxanthin an eye-specific carotenoid. The chain is All-trans-retinyl ester 13-cis isomerohydrolase (rpe65b) from Danio rerio (Zebrafish).